We begin with the raw amino-acid sequence, 428 residues long: Glutamate-1-semialdehyde 2,1-aminomutase 2 (428 aa).

An N6-(pyridoxal phosphate)lysine modification is found at Lys267.

The protein belongs to the class-III pyridoxal-phosphate-dependent aminotransferase family. HemL subfamily. In terms of assembly, homodimer. It depends on pyridoxal 5'-phosphate as a cofactor.

The protein resides in the cytoplasm. The enzyme catalyses (S)-4-amino-5-oxopentanoate = 5-aminolevulinate. It functions in the pathway porphyrin-containing compound metabolism; protoporphyrin-IX biosynthesis; 5-aminolevulinate from L-glutamyl-tRNA(Glu): step 2/2. The polypeptide is Glutamate-1-semialdehyde 2,1-aminomutase 2 (Oceanobacillus iheyensis (strain DSM 14371 / CIP 107618 / JCM 11309 / KCTC 3954 / HTE831)).